Here is a 506-residue protein sequence, read N- to C-terminus: ATP synthase subunit alpha (506 aa).

169-176 (GDRGTGKT) contacts ATP.

The protein belongs to the ATPase alpha/beta chains family. In terms of assembly, F-type ATPases have 2 components, CF(1) - the catalytic core - and CF(0) - the membrane proton channel. CF(1) has five subunits: alpha(3), beta(3), gamma(1), delta(1), epsilon(1). CF(0) has three main subunits: a(1), b(2) and c(9-12). The alpha and beta chains form an alternating ring which encloses part of the gamma chain. CF(1) is attached to CF(0) by a central stalk formed by the gamma and epsilon chains, while a peripheral stalk is formed by the delta and b chains.

It is found in the cell membrane. It carries out the reaction ATP + H2O + 4 H(+)(in) = ADP + phosphate + 5 H(+)(out). Its function is as follows. Produces ATP from ADP in the presence of a proton gradient across the membrane. The alpha chain is a regulatory subunit. The sequence is that of ATP synthase subunit alpha from Symbiobacterium thermophilum (strain DSM 24528 / JCM 14929 / IAM 14863 / T).